Consider the following 212-residue polypeptide: uncharacterized protein (212 aa).

The active-site Acyl-thioester intermediate is the Cys-52. Residues His-89 and Asp-104 contribute to the active site.

The protein belongs to the arylamine N-acetyltransferase family.

This is an uncharacterized protein from Acanthamoeba polyphaga (Amoeba).